We begin with the raw amino-acid sequence, 222 residues long: Protein-L-isoaspartate O-methyltransferase (222 aa).

Ser-70 is a catalytic residue.

It belongs to the methyltransferase superfamily. L-isoaspartyl/D-aspartyl protein methyltransferase family.

It localises to the cytoplasm. It catalyses the reaction [protein]-L-isoaspartate + S-adenosyl-L-methionine = [protein]-L-isoaspartate alpha-methyl ester + S-adenosyl-L-homocysteine. Its function is as follows. Catalyzes the methyl esterification of L-isoaspartyl residues in peptides and proteins that result from spontaneous decomposition of normal L-aspartyl and L-asparaginyl residues. It plays a role in the repair and/or degradation of damaged proteins. The protein is Protein-L-isoaspartate O-methyltransferase of Jannaschia sp. (strain CCS1).